The chain runs to 370 residues: ATP/GTP phosphatase (370 aa).

It carries out the reaction ATP + H2O = ADP + phosphate + H(+). It catalyses the reaction GTP + H2O = GDP + phosphate + H(+). Has nucleotide phosphatase activity toward ATP and GTP, but not toward CTP, TTP and ADP. This is ATP/GTP phosphatase from Helicobacter pylori (strain ATCC 700392 / 26695) (Campylobacter pylori).